A 369-amino-acid polypeptide reads, in one-letter code: Superinfection exclusion protein (369 aa).

The signal sequence occupies residues 1-15; that stretch reads MIALLILSLTCSAST.

It belongs to the serpin family. Orthopoxvirus OPG040 subfamily. As to quaternary structure, interacts with A56 protein.

It is found in the virion membrane. It localises to the host cell membrane. Prevents cell to cell fusion via its interaction with A56 protein. The A56-K2 complex associates with components of the entry fusion complex (EFC) presumably to avoid superinfection and syncytium formation. The protein is Superinfection exclusion protein (OPG040) of Vaccinia virus (strain Ankara) (VACV).